The primary structure comprises 178 residues: ATP synthase subunit delta (178 aa).

This sequence belongs to the ATPase delta chain family. In terms of assembly, F-type ATPases have 2 components, F(1) - the catalytic core - and F(0) - the membrane proton channel. F(1) has five subunits: alpha(3), beta(3), gamma(1), delta(1), epsilon(1). F(0) has three main subunits: a(1), b(2) and c(10-14). The alpha and beta chains form an alternating ring which encloses part of the gamma chain. F(1) is attached to F(0) by a central stalk formed by the gamma and epsilon chains, while a peripheral stalk is formed by the delta and b chains.

The protein resides in the cell membrane. F(1)F(0) ATP synthase produces ATP from ADP in the presence of a proton or sodium gradient. F-type ATPases consist of two structural domains, F(1) containing the extramembraneous catalytic core and F(0) containing the membrane proton channel, linked together by a central stalk and a peripheral stalk. During catalysis, ATP synthesis in the catalytic domain of F(1) is coupled via a rotary mechanism of the central stalk subunits to proton translocation. Its function is as follows. This protein is part of the stalk that links CF(0) to CF(1). It either transmits conformational changes from CF(0) to CF(1) or is implicated in proton conduction. This Streptococcus agalactiae serotype Ia (strain ATCC 27591 / A909 / CDC SS700) protein is ATP synthase subunit delta.